We begin with the raw amino-acid sequence, 384 residues long: Oxoeicosanoid receptor 1 (384 aa).

The interval 1–21 (MELHNLSSPSPSLSSSVLPPS) is disordered. Residues 1–58 (MELHNLSSPSPSLSSSVLPPSFSPSPSSAPSAFTTVGGSSGGPCHPTSSSLVSAFLAP) lie on the Extracellular side of the membrane. N-linked (GlcNAc...) asparagine glycosylation is present at asparagine 5. Over residues 7 to 21 (SSPSPSLSSSVLPPS) the composition is skewed to low complexity. A helical membrane pass occupies residues 59-79 (ILALEFVLGLVGNSLALFIFC). The Cytoplasmic segment spans residues 80 to 87 (IHTRPWTS). A helical membrane pass occupies residues 88-108 (NTVFLVSLVAADFLLISNLPL). Topologically, residues 109 to 129 (RVDYYLLHETWRFGAAACKVN) are extracellular. Cysteine 126 and cysteine 198 are disulfide-bonded. The helical transmembrane segment at 130-152 (LFMLSTNRTASVVFLTAIALNRY) threads the bilayer. Topologically, residues 153-172 (LKVVQPHHVLSRASVGAAAR) are cytoplasmic. A helical membrane pass occupies residues 173 to 193 (VAGGLWVGILLLNGHLLLSTF). Residues 194 to 215 (SGPSCLSYRVGTKPSASLRWHQ) lie on the Extracellular side of the membrane. A helical transmembrane segment spans residues 216 to 236 (ALYLLEFFLPLALILFAIVSI). At 237–256 (GLTIRNRGLGGQAGPQRAMR) the chain is on the cytoplasmic side. Residues 257-277 (VLAMVVAVYTICFLPSIIFGM) traverse the membrane as a helical segment. The Extracellular segment spans residues 278-297 (ASMVAFWLSACRSLDLCTQL). A helical membrane pass occupies residues 298–318 (FHGSLAFTYLNSVLDPVLYCF). At 319 to 384 (SSPNFLHQSR…SLEKEGSSQG (66 aa)) the chain is on the cytoplasmic side.

It belongs to the G-protein coupled receptor 1 family. In terms of tissue distribution, expressed in various tissues except brain. Expression is more intense in liver, kidney, peripheral leukocyte, lung, and spleen than in other tissues. Highly expressed in eosinophils, neutrophils, and lung macrophages.

It localises to the membrane. Its function is as follows. Receptor for eicosanoids and polyunsaturated fatty acids such as 5-oxo-6E,8Z,11Z,14Z-eicosatetraenoic acid (5-OXO-ETE), 5(S)-hydroperoxy-6E,8Z,11Z,14Z-eicosatetraenoic acid (5(S)-HPETE) and arachidonic acid. Seems to be coupled to the G(i)/G(o), families of heteromeric G proteins. This Homo sapiens (Human) protein is Oxoeicosanoid receptor 1 (OXER1).